The chain runs to 858 residues: Protein 4.1 (858 aa).

The disordered stretch occupies residues 1-125 (MTTEKSLAAE…KEIELGNSLD (125 aa)). At Ser14 the chain carries Phosphoserine. Over residues 31–50 (QQETQLEEASQAAAAEGSDQ) the composition is skewed to low complexity. Thr62 carries the phosphothreonine modification. Positions 63-77 (PTHEDLTKNKERTSE) are enriched in basic and acidic residues. Positions 78 to 89 (SRGLSRLLSSFL) are enriched in low complexity. Residues Ser86, Ser87, Ser97, Ser106, Ser123, Ser151, Ser153, and Ser154 each carry the phosphoserine modification. A compositionally biased stretch (basic and acidic residues) spans 103-119 (EVESEKEKGEGGQKEIE). The disordered stretch occupies residues 155 to 208 (IETQPAQEEHREDPDSETKEGEGIEECSGTEVKEDPESRAEREPEASQKPVRRH). 2 stretches are compositionally biased toward basic and acidic residues: residues 161 to 176 (QEEHREDPDSETKEGE) and 185 to 200 (EVKEDPESRAEREPEA). Ser192 carries the phosphoserine modification. The 282-residue stretch at 211–492 (MHCKVSLLDD…EHHTFFRLTS (282 aa)) folds into the FERM domain. At Tyr223 the chain carries Phosphotyrosine. Thr379 carries the phosphothreonine modification. A hydrophilic region spans residues 495 to 608 (TIPKSKFLAL…PAEPEPTEAW (114 aa)). The interval 518–636 (TRQASALIDR…TQKLAGKGED (119 aa)) is disordered. Residues Ser522, Ser541, Ser543, and Ser556 each carry the phosphoserine modification. Basic and acidic residues-rich tracts occupy residues 581-595 (TPKEAVKVEEKRGEE) and 606-615 (EAWKVEKTHT). The segment at 609-707 (KVEKTHTEVT…WDKRLSTHSP (99 aa)) is spectrin--actin-binding. Residues 616–629 (EVTVPTSNGDQTQK) are compositionally biased toward polar residues. At Tyr654 the chain carries Phosphotyrosine. Phosphoserine is present on residues Ser658, Ser668, Ser678, Ser703, and Ser706. The interval 710 to 858 (TLNINGQVPT…VHQETEISEE (149 aa)) is C-terminal (CTD). A phosphothreonine mark is found at Thr730 and Thr853.

Binds with a high affinity to glycophorin and with lower affinity to band III protein. Associates with the nuclear mitotic apparatus. Binds calmodulin, CPAP and DLG1. Also found to associate with contractile apparatus and tight junctions. Interacts with NUMA1; this interaction is negatively regulated by CDK1 during metaphase and promotes anaphase-specific localization of NUMA1 in symmetrically dividing cells. Interacts with ATP2B1; regulates small intestinal calcium absorption through regulation of membrane expression of ATP2B1. In terms of processing, O-glycosylated; contains N-acetylglucosamine side chains in the C-terminal domain. Post-translationally, phosphorylated at multiple sites by different protein kinases and each phosphorylation event selectively modulates the protein's functions. Phosphorylation on Tyr-654 reduces the ability of 4.1 to promote the assembly of the spectrin/actin/4.1 ternary complex.

The protein localises to the nucleus. It is found in the cytoplasm. The protein resides in the cytoskeleton. Its subcellular location is the cell cortex. Protein 4.1 is a major structural element of the erythrocyte membrane skeleton. It plays a key role in regulating membrane physical properties of mechanical stability and deformability by stabilizing spectrin-actin interaction. Recruits DLG1 to membranes. Required for dynein-dynactin complex and NUMA1 recruitment at the mitotic cell cortex during anaphase. The polypeptide is Protein 4.1 (Mus musculus (Mouse)).